A 111-amino-acid chain; its full sequence is 2Fe-2S ferredoxin (111 aa).

One can recognise a 2Fe-2S ferredoxin-type domain in the interval 5 to 107; the sequence is IKVTFVINNG…GIKVRLPSAT (103 aa). [2Fe-2S] cluster contacts are provided by cysteine 42, cysteine 48, cysteine 51, and cysteine 88.

The protein belongs to the adrenodoxin/putidaredoxin family. [2Fe-2S] cluster serves as cofactor.

Ferredoxin are iron-sulfur proteins that transfer electrons in a wide variety of metabolic reactions. This chain is 2Fe-2S ferredoxin (fdxB), found in Rickettsia bellii (strain RML369-C).